Reading from the N-terminus, the 190-residue chain is dCTP deaminase (190 aa).

Residue 113-118 (KSTYAR) participates in dCTP binding. Glu139 serves as the catalytic Proton donor/acceptor. DCTP-binding residues include Gln158, Tyr172, Lys181, and Gln182.

The protein belongs to the dCTP deaminase family. Homotrimer.

It carries out the reaction dCTP + H2O + H(+) = dUTP + NH4(+). Its pathway is pyrimidine metabolism; dUMP biosynthesis; dUMP from dCTP (dUTP route): step 1/2. Catalyzes the deamination of dCTP to dUTP. The protein is dCTP deaminase of Chlamydia caviae (strain ATCC VR-813 / DSM 19441 / 03DC25 / GPIC) (Chlamydophila caviae).